The following is a 614-amino-acid chain: UvrABC system protein C (614 aa).

A GIY-YIG domain is found at 20–98 (TAPGVYRMYA…IKSLSPRYNV (79 aa)). The UVR domain occupies 207 to 242 (DELTRELGEQMQAASEALEFEQAARLRDLISSLRSM).

This sequence belongs to the UvrC family. In terms of assembly, interacts with UvrB in an incision complex.

The protein resides in the cytoplasm. In terms of biological role, the UvrABC repair system catalyzes the recognition and processing of DNA lesions. UvrC both incises the 5' and 3' sides of the lesion. The N-terminal half is responsible for the 3' incision and the C-terminal half is responsible for the 5' incision. This is UvrABC system protein C from Stenotrophomonas maltophilia (strain K279a).